Reading from the N-terminus, the 206-residue chain is Isopentenyl-diphosphate Delta-isomerase (206 aa).

2 residues coordinate Mn(2+): His-44 and His-51. Residues 49 to 183 enclose the Nudix hydrolase domain; that stretch reads ALHLAFSCHV…PWAFSPWLVL (135 aa). Cys-86 is an active-site residue. Residue Cys-86 coordinates Mg(2+). His-88 is a Mn(2+) binding site. Glu-106 provides a ligand contact to Mg(2+). Mn(2+) is bound by residues Glu-133 and Glu-135. The active site involves Glu-135.

Belongs to the IPP isomerase type 1 family. Requires Mg(2+) as cofactor. It depends on Mn(2+) as a cofactor.

It localises to the cytoplasm. The catalysed reaction is isopentenyl diphosphate = dimethylallyl diphosphate. Its pathway is isoprenoid biosynthesis; dimethylallyl diphosphate biosynthesis; dimethylallyl diphosphate from isopentenyl diphosphate: step 1/1. In terms of biological role, catalyzes the 1,3-allylic rearrangement of the homoallylic substrate isopentenyl (IPP) to its highly electrophilic allylic isomer, dimethylallyl diphosphate (DMAPP). This Agromyces mediolanus (Corynebacterium mediolanum) protein is Isopentenyl-diphosphate Delta-isomerase.